Consider the following 330-residue polypeptide: Beta-ketoacyl-[acyl-carrier-protein] synthase III (330 aa).

Residues Cys-115 and His-255 contribute to the active site. Residues 256–260 (QANFR) form an ACP-binding region. Residue Asn-285 is part of the active site.

The protein belongs to the thiolase-like superfamily. FabH family. In terms of assembly, homodimer.

Its subcellular location is the cytoplasm. It carries out the reaction malonyl-[ACP] + acetyl-CoA + H(+) = 3-oxobutanoyl-[ACP] + CO2 + CoA. It participates in lipid metabolism; fatty acid biosynthesis. In terms of biological role, catalyzes the condensation reaction of fatty acid synthesis by the addition to an acyl acceptor of two carbons from malonyl-ACP. Catalyzes the first condensation reaction which initiates fatty acid synthesis and may therefore play a role in governing the total rate of fatty acid production. Possesses both acetoacetyl-ACP synthase and acetyl transacylase activities. Its substrate specificity determines the biosynthesis of branched-chain and/or straight-chain of fatty acids. This Helicobacter pylori (strain G27) protein is Beta-ketoacyl-[acyl-carrier-protein] synthase III.